The following is a 271-amino-acid chain: GTP cyclohydrolase FolE2 (271 aa).

This sequence belongs to the GTP cyclohydrolase IV family.

It carries out the reaction GTP + H2O = 7,8-dihydroneopterin 3'-triphosphate + formate + H(+). It functions in the pathway cofactor biosynthesis; 7,8-dihydroneopterin triphosphate biosynthesis; 7,8-dihydroneopterin triphosphate from GTP: step 1/1. Functionally, converts GTP to 7,8-dihydroneopterin triphosphate. The sequence is that of GTP cyclohydrolase FolE2 from Geotalea uraniireducens (strain Rf4) (Geobacter uraniireducens).